We begin with the raw amino-acid sequence, 167 residues long: Protein archease (167 aa).

A2 is subject to N-acetylalanine. Residues D39, D166, and I167 each contribute to the Ca(2+) site.

It belongs to the archease family. Component of the tRNA-splicing ligase complex.

In terms of biological role, component of the tRNA-splicing ligase complex required to facilitate the enzymatic turnover of catalytic subunit RTCB. Together with DDX1, acts by facilitating the guanylylation of RTCB, a key intermediate step in tRNA ligation. The chain is Protein archease (ZBTB8OS) from Homo sapiens (Human).